We begin with the raw amino-acid sequence, 559 residues long: U-box domain-containing protein 41 (559 aa).

Disordered stretches follow at residues 1–30 (MGGNKQRWFSFHQRSSSATTTTLPQHKHDE) and 121–156 (RMDKDPNPSPGQSPGPGDKDPEPEILPPVEENSPSD). Residues 12 to 24 (HQRSSSATTTTLP) are compositionally biased toward polar residues. In terms of domain architecture, U-box spans 30–104 (ETPPEFLCPI…FSWCDRQKVD (75 aa)). ARM repeat units lie at residues 266 to 305 (EDLRVSLCTDRILSFLRSLLVSRYNLVQTNAAASVVNLSL), 307 to 346 (KQNKVKIVRSGFVPLLIDVLKSGTTEAQEHVAGALFSLAL), 348 to 388 (DENK…HLSL), 390 to 427 (PSNRTRLVRAGAVPTLLSMVRSGDSTSRILLVLCNLAA), and 428 to 472 (CPDG…TLCQ).

It catalyses the reaction S-ubiquitinyl-[E2 ubiquitin-conjugating enzyme]-L-cysteine + [acceptor protein]-L-lysine = [E2 ubiquitin-conjugating enzyme]-L-cysteine + N(6)-ubiquitinyl-[acceptor protein]-L-lysine.. The protein operates within protein modification; protein ubiquitination. Functionally, functions as an E3 ubiquitin ligase. In Arabidopsis thaliana (Mouse-ear cress), this protein is U-box domain-containing protein 41 (PUB41).